Here is a 508-residue protein sequence, read N- to C-terminus: Light-independent protochlorophyllide reductase subunit B (508 aa).

Residue Asp-36 participates in [4Fe-4S] cluster binding. Residue Asp-294 is the Proton donor of the active site. Residue 429 to 430 (GM) coordinates substrate.

This sequence belongs to the ChlB/BchB/BchZ family. As to quaternary structure, protochlorophyllide reductase is composed of three subunits; ChlL, ChlN and ChlB. Forms a heterotetramer of two ChlB and two ChlN subunits. [4Fe-4S] cluster serves as cofactor.

It carries out the reaction chlorophyllide a + oxidized 2[4Fe-4S]-[ferredoxin] + 2 ADP + 2 phosphate = protochlorophyllide a + reduced 2[4Fe-4S]-[ferredoxin] + 2 ATP + 2 H2O. Its pathway is porphyrin-containing compound metabolism; chlorophyll biosynthesis (light-independent). Its function is as follows. Component of the dark-operative protochlorophyllide reductase (DPOR) that uses Mg-ATP and reduced ferredoxin to reduce ring D of protochlorophyllide (Pchlide) to form chlorophyllide a (Chlide). This reaction is light-independent. The NB-protein (ChlN-ChlB) is the catalytic component of the complex. The protein is Light-independent protochlorophyllide reductase subunit B of Synechocystis sp. (strain ATCC 27184 / PCC 6803 / Kazusa).